The chain runs to 337 residues: tRNA(Ile)-lysidine synthase (337 aa).

40 to 45 is an ATP binding site; it reads SGGQDS.

It belongs to the tRNA(Ile)-lysidine synthase family.

The protein localises to the cytoplasm. The catalysed reaction is cytidine(34) in tRNA(Ile2) + L-lysine + ATP = lysidine(34) in tRNA(Ile2) + AMP + diphosphate + H(+). Ligates lysine onto the cytidine present at position 34 of the AUA codon-specific tRNA(Ile) that contains the anticodon CAU, in an ATP-dependent manner. Cytidine is converted to lysidine, thus changing the amino acid specificity of the tRNA from methionine to isoleucine. In Parasynechococcus marenigrum (strain WH8102), this protein is tRNA(Ile)-lysidine synthase.